The sequence spans 66 residues: Venom peptide CtAPI (66 aa).

Intrachain disulfides connect cysteine 7–cysteine 44, cysteine 16–cysteine 40, cysteine 20–cysteine 33, cysteine 24–cysteine 64, and cysteine 46–cysteine 58. Positions 7–64 (CEKDEEFVNCAPRCPQNCRNIRSYQPCLVLTPVCAPGCVCRSGKVKNDRGDCVSITDC) constitute a TIL domain.

It belongs to the serine protease inhibitor-like (TIL domain-containing) family. As to expression, expressed by the venom gland.

The protein localises to the secreted. Functionally, serine protease inhibitor. The sequence is that of Venom peptide CtAPI from Chaerilus tricostatus (Scorpion).